The primary structure comprises 258 residues: Snake venom serine protease 3 (258 aa).

Residues 1–18 (MVLIRVLANLLILQLSYA) form the signal peptide. Positions 19–24 (QKSSEL) are excised as a propeptide. The 225-residue stretch at 25–249 (IIGGHPCNIN…YTDWIQSIIA (225 aa)) folds into the Peptidase S1 domain. 6 disulfides stabilise this stretch: Cys-31–Cys-163, Cys-50–Cys-66, Cys-98–Cys-256, Cys-142–Cys-210, Cys-174–Cys-189, and Cys-200–Cys-225. Residue Asn-44 is glycosylated (N-linked (GlcNAc...) asparagine). Active-site charge relay system residues include His-65 and Asp-110. Residue Ser-204 is the Charge relay system of the active site. N-linked (GlcNAc...) asparagine glycosylation occurs at Asn-239.

This sequence belongs to the peptidase S1 family. Snake venom subfamily. In terms of assembly, monomer. As to expression, expressed by the venom gland.

It localises to the secreted. Snake venom serine protease that may act in the hemostasis system of the prey. The chain is Snake venom serine protease 3 from Protobothrops jerdonii (Jerdon's pitviper).